We begin with the raw amino-acid sequence, 147 residues long: Protein PBDC1 homolog (147 aa).

Belongs to the PBDC1 family.

It localises to the cytoplasm. It is found in the nucleus. This chain is Protein PBDC1 homolog, found in Schizosaccharomyces pombe (strain 972 / ATCC 24843) (Fission yeast).